The chain runs to 72 residues: Phycobilisome 37.5 kDa linker polypeptide, phycocyanin-associated, rod (72 aa).

In terms of domain architecture, PBS-linker spans 1 to 72 (MTSSAAAIRL…ASGNISVREF (72 aa)).

This sequence belongs to the phycobilisome linker protein family.

The protein resides in the cellular thylakoid membrane. In terms of biological role, rod linker protein, associated with phycocyanin. Linker polypeptides determine the state of aggregation and the location of the disk-shaped phycobiliprotein units within the phycobilisome and modulate their spectroscopic properties in order to mediate a directed and optimal energy transfer. The sequence is that of Phycobilisome 37.5 kDa linker polypeptide, phycocyanin-associated, rod (cpcH2) from Pseudanabaena tenuis (strain PCC 7409).